The primary structure comprises 245 residues: tRNA1(Val) (adenine(37)-N6)-methyltransferase (245 aa).

Belongs to the methyltransferase superfamily. tRNA (adenine-N(6)-)-methyltransferase family.

The protein localises to the cytoplasm. It carries out the reaction adenosine(37) in tRNA1(Val) + S-adenosyl-L-methionine = N(6)-methyladenosine(37) in tRNA1(Val) + S-adenosyl-L-homocysteine + H(+). Functionally, specifically methylates the adenine in position 37 of tRNA(1)(Val) (anticodon cmo5UAC). This is tRNA1(Val) (adenine(37)-N6)-methyltransferase from Shigella sonnei (strain Ss046).